The primary structure comprises 444 residues: Exodeoxyribonuclease 7 large subunit (444 aa).

The protein belongs to the XseA family. As to quaternary structure, heterooligomer composed of large and small subunits.

Its subcellular location is the cytoplasm. The enzyme catalyses Exonucleolytic cleavage in either 5'- to 3'- or 3'- to 5'-direction to yield nucleoside 5'-phosphates.. In terms of biological role, bidirectionally degrades single-stranded DNA into large acid-insoluble oligonucleotides, which are then degraded further into small acid-soluble oligonucleotides. The chain is Exodeoxyribonuclease 7 large subunit from Hahella chejuensis (strain KCTC 2396).